We begin with the raw amino-acid sequence, 862 residues long: Alpha,alpha-trehalose-phosphate synthase [UDP-forming] 5 (862 aa).

Ser-5 bears the Phosphoserine mark. Thr-32 carries the phosphothreonine modification. The tract at residues 60 to 546 (DRIIIVGNQL…ARSFIQDLER (487 aa)) is glycosyltransferase.

This sequence in the N-terminal section; belongs to the glycosyltransferase 20 family. In the C-terminal section; belongs to the trehalose phosphatase family. As to quaternary structure, binds to the phosphopeptide-binding site of GRF/14-3-3 and to MBF1c. In terms of processing, both Ser-5 and Thr-32 must be phosphorylated for binding to GRF/14-3-3. In terms of tissue distribution, low expression in leaves, stems, flower buds, flowers and siliques.

The enzyme catalyses D-glucose 6-phosphate + UDP-alpha-D-glucose = alpha,alpha-trehalose 6-phosphate + UDP + H(+). The protein is Alpha,alpha-trehalose-phosphate synthase [UDP-forming] 5 (TPS5) of Arabidopsis thaliana (Mouse-ear cress).